Reading from the N-terminus, the 410-residue chain is Subtilisin-like protease CPC735_003880 (410 aa).

A signal peptide spans 1–17; that stretch reads MKLLKSSLLLLLPFVTA. The propeptide occupies 18 to 118; that stretch reads NPIPSEDKDI…VTPDRKVYLA (101 aa). An Inhibitor I9 domain is found at 31–118; that stretch reads RYIVTLKDGI…VTPDRKVYLA (88 aa). The region spanning 127–410 is the Peptidase S8 domain; that stretch reads GYNLGHMSSK…IQEMNETVIA (284 aa). Catalysis depends on D159, which acts as the Charge relay system. The N-linked (GlcNAc...) asparagine glycan is linked to N182. The active-site Charge relay system is H191. N-linked (GlcNAc...) asparagine glycosylation is found at N238, N251, and N338. The active-site Charge relay system is S347. Residue N405 is glycosylated (N-linked (GlcNAc...) asparagine).

The protein belongs to the peptidase S8 family.

The protein localises to the secreted. In terms of biological role, secreted subtilisin-like serine protease with keratinolytic activity that contributes to pathogenicity. The chain is Subtilisin-like protease CPC735_003880 from Coccidioides posadasii (strain C735) (Valley fever fungus).